A 707-amino-acid polypeptide reads, in one-letter code: Polyribonucleotide nucleotidyltransferase (707 aa).

Residues Asp485 and Asp491 each contribute to the Mg(2+) site. Positions Pro552 to Ile611 constitute a KH domain. An S1 motif domain is found at Gly621–Lys689.

Belongs to the polyribonucleotide nucleotidyltransferase family. As to quaternary structure, component of the RNA degradosome, which is a multiprotein complex involved in RNA processing and mRNA degradation. Requires Mg(2+) as cofactor.

It localises to the cytoplasm. The enzyme catalyses RNA(n+1) + phosphate = RNA(n) + a ribonucleoside 5'-diphosphate. In terms of biological role, involved in mRNA degradation. Catalyzes the phosphorolysis of single-stranded polyribonucleotides processively in the 3'- to 5'-direction. In Photobacterium profundum (strain SS9), this protein is Polyribonucleotide nucleotidyltransferase.